Reading from the N-terminus, the 101-residue chain is Integration host factor subunit beta (101 aa).

Belongs to the bacterial histone-like protein family. In terms of assembly, heterodimer of an alpha and a beta chain.

Functionally, this protein is one of the two subunits of integration host factor, a specific DNA-binding protein that functions in genetic recombination as well as in transcriptional and translational control. The polypeptide is Integration host factor subunit beta (Maricaulis maris (strain MCS10) (Caulobacter maris)).